Here is a 193-residue protein sequence, read N- to C-terminus: Cysteine and glycine-rich protein 2 (193 aa).

Positions Cys10–Cys61 constitute an LIM zinc-binding 1 domain. Positions Lys64 to Lys69 match the Nuclear localization signal motif. Residue Lys91 forms a Glycyl lysine isopeptide (Lys-Gly) (interchain with G-Cter in SUMO2) linkage. N6-acetyllysine is present on residues Lys112 and Lys131. Residues Cys119–Cys170 enclose the LIM zinc-binding 2 domain. The residue at position 137 (Lys137) is an N6-acetyllysine; alternate. Lys137 bears the N6-succinyllysine; alternate mark. Lys161 carries the post-translational modification N6-acetyllysine.

In terms of assembly, interacts with KAT14. The LIM domain 1 is necessary and sufficient for this interaction. Interacts with GLRX3.

The protein localises to the nucleus. In terms of biological role, drastically down-regulated in response to PDGF-BB or cell injury, that promote smooth muscle cell proliferation and dedifferentiation. Seems to play a role in the development of the embryonic vascular system. The protein is Cysteine and glycine-rich protein 2 (CSRP2) of Bos taurus (Bovine).